A 461-amino-acid chain; its full sequence is ATP synthase subunit beta (461 aa).

An ATP-binding site is contributed by 151 to 158 (GGAGVGKT).

It belongs to the ATPase alpha/beta chains family. F-type ATPases have 2 components, CF(1) - the catalytic core - and CF(0) - the membrane proton channel. CF(1) has five subunits: alpha(3), beta(3), gamma(1), delta(1), epsilon(1). CF(0) has three main subunits: a(1), b(2) and c(9-12). The alpha and beta chains form an alternating ring which encloses part of the gamma chain. CF(1) is attached to CF(0) by a central stalk formed by the gamma and epsilon chains, while a peripheral stalk is formed by the delta and b chains.

Its subcellular location is the cell inner membrane. The catalysed reaction is ATP + H2O + 4 H(+)(in) = ADP + phosphate + 5 H(+)(out). Functionally, produces ATP from ADP in the presence of a proton gradient across the membrane. The catalytic sites are hosted primarily by the beta subunits. The sequence is that of ATP synthase subunit beta from Alteromonas mediterranea (strain DSM 17117 / CIP 110805 / LMG 28347 / Deep ecotype).